The chain runs to 683 residues: Amino acid transporter heavy chain SLC3A1 (683 aa).

A compositionally biased stretch (basic and acidic residues) spans 1 to 10; that stretch reads MNEDKDKRDS. The segment at 1–50 is disordered; the sequence is MNEDKDKRDSIQMSMKGCRTNNGFVQNEDIQEQDPDSRDTPQSNAVSIPA. Residues 1–86 lie on the Cytoplasmic side of the membrane; sequence MNEDKDKRDS…ARYRVPREIL (86 aa). Ser10 carries the post-translational modification Phosphoserine. A helical; Signal-anchor for type II membrane protein membrane pass occupies residues 87–107; it reads FWLTVVSVFLLIGATIAIIII. The Extracellular segment spans residues 108–683; sequence SPKCLDWWQA…SVLDLLYSSC (576 aa). Asn211 is a Ca(2+) binding site. 3 N-linked (GlcNAc...) asparagine glycosylation sites follow: Asn211, Asn238, and Asn258. A disulfide bridge connects residues Cys239 and Cys270. Positions 281, 315, 316, and 318 each coordinate Ca(2+). An N-linked (GlcNAc...) asparagine glycan is attached at Asn329. Position 383 is a phosphoserine (Ser383). N-linked (GlcNAc...) asparagine glycosylation is found at Asn510, Asn520, and Asn574. Cystine bridges form between Cys568–Cys664 and Cys671–Cys683.

Disulfide-linked heterodimer composed of the catalytic light subunit SLC7A9 and the heavy subunit SLC3A1. The heterodimer is the minimal functional unit. Assembles in non-covalently linked heterotetramers (dimers of heterodimers) and higher order oligomers; the oligomerization is mediated by SLC3A1 likely to prevent degradation in the endoplasmic reticulum and facilitate heteromer trafficking to the plasma membrane. Disulfide-linked heterodimer composed of the catalytic light subunit SLC7A13 and the heavy subunit SLC3A1. In terms of tissue distribution, predominantly expressed in kidney and intestine. In kidney localized to the apical membrane of the proximal tubules.

The protein localises to the cell membrane. It localises to the apical cell membrane. In terms of biological role, acts as a chaperone that facilitates biogenesis and trafficking of functional transporter heteromers to the plasma membrane. Associates with SLC7A9 to form a functional transporter complex that mediates the electrogenic exchange between cationic amino acids and neutral amino acids, with a stoichiometry of 1:1. SLC7A9-SLC3A1 transporter has system b(0,+)-like activity with high affinity for extracellular cationic amino acids and L-cystine and lower affinity for intracellular neutral amino acids. Substrate exchange is driven by high concentration of intracellular neutral amino acids and the intracellular reduction of L-cystine to L-cysteine. SLC7A9-SLC3A1 acts as a major transporter for reabsorption of L-cystine and dibasic amino acids across the brush border membrane in early proximal tubules. Associates with SLC7A13 to form a functional complex that transports anionic and neutral amino acids via exchange or facilitated diffusion. SLC7A13-SLC3A1 may act as a major transporter for L-cystine in late proximal tubules, ensuring its reabsorption from the luminal fluid in exchange for cytosolic L-glutamate or L-aspartate. The polypeptide is Amino acid transporter heavy chain SLC3A1 (Slc3a1) (Rattus norvegicus (Rat)).